Reading from the N-terminus, the 1341-residue chain is DNA-directed RNA polymerase subunit beta (1341 aa).

This sequence belongs to the RNA polymerase beta chain family. The RNAP catalytic core consists of 2 alpha, 1 beta, 1 beta' and 1 omega subunit. When a sigma factor is associated with the core the holoenzyme is formed, which can initiate transcription.

The enzyme catalyses RNA(n) + a ribonucleoside 5'-triphosphate = RNA(n+1) + diphosphate. Its function is as follows. DNA-dependent RNA polymerase catalyzes the transcription of DNA into RNA using the four ribonucleoside triphosphates as substrates. This Photobacterium profundum (strain SS9) protein is DNA-directed RNA polymerase subunit beta.